Consider the following 258-residue polypeptide: NAD(P)H-hydrate epimerase (258 aa).

The 230-residue stretch at 15–244 folds into the YjeF N-terminal domain; it reads AFQLDQELMS…RIAKEYGIED (230 aa). Residue 75-79 coordinates (6S)-NADPHX; it reads NNGGD. The K(+) site is built by asparagine 76 and aspartate 145. (6S)-NADPHX contacts are provided by residues 149 to 155 and aspartate 181; that span reads GFSFKPP. K(+) is bound at residue serine 184.

This sequence belongs to the NnrE/AIBP family. Requires K(+) as cofactor.

The protein resides in the cytoplasm. It localises to the mitochondrion. It catalyses the reaction (6R)-NADHX = (6S)-NADHX. The catalysed reaction is (6R)-NADPHX = (6S)-NADPHX. In terms of biological role, catalyzes the epimerization of the S- and R-forms of NAD(P)HX, a damaged form of NAD(P)H that is a result of enzymatic or heat-dependent hydration. This is a prerequisite for the S-specific NAD(P)H-hydrate dehydratase to allow the repair of both epimers of NAD(P)HX. The sequence is that of NAD(P)H-hydrate epimerase from Candida albicans (strain SC5314 / ATCC MYA-2876) (Yeast).